Consider the following 87-residue polypeptide: Small ribosomal subunit protein uS15c (87 aa).

This sequence belongs to the universal ribosomal protein uS15 family. Part of the 30S ribosomal subunit.

It is found in the plastid. It localises to the chloroplast. This chain is Small ribosomal subunit protein uS15c (rps15), found in Oenothera biennis (German evening primrose).